Reading from the N-terminus, the 129-residue chain is ATP synthase epsilon chain (129 aa).

It belongs to the ATPase epsilon chain family. As to quaternary structure, F-type ATPases have 2 components, CF(1) - the catalytic core - and CF(0) - the membrane proton channel. CF(1) has five subunits: alpha(3), beta(3), gamma(1), delta(1), epsilon(1). CF(0) has three main subunits: a, b and c.

The protein resides in the cell inner membrane. Produces ATP from ADP in the presence of a proton gradient across the membrane. This chain is ATP synthase epsilon chain, found in Nitratiruptor sp. (strain SB155-2).